Here is a 500-residue protein sequence, read N- to C-terminus: Cysteine-rich secretory protein LCCL domain-containing 1 (500 aa).

An N-terminal signal peptide occupies residues 1-23 (MMCKAQEWLRVTALLFVARAVPA). An SCP domain is found at 66–206 (LDLHNKLRSQ…PKAVYLVCNY (141 aa)). The tract at residues 258-281 (EIERQQSQVHDTHVRTRSDDSDRN) is disordered. LCCL domains lie at 289–384 (MSQI…ANSF) and 390–492 (TVQA…TGGK). 4 disulfide bridges follow: cysteine 295-cysteine 313, cysteine 317-cysteine 337, cysteine 396-cysteine 418, and cysteine 422-cysteine 445.

It belongs to the CRISP family.

It localises to the secreted. The chain is Cysteine-rich secretory protein LCCL domain-containing 1 (Crispld1) from Mus musculus (Mouse).